Consider the following 267-residue polypeptide: MSHYPASGTWQACPKCGRHVHQRQWGTYQQCPYCHYWQRLTTAQRLEQLVDEGSFQPLTMTERPVNQLGFPDYTNKLRRAQRQTGLNEAVVCGTALIEQQPCILAVMDSHFMMGTLNTAVTRRLLHASEQARAQRLPLIIVTASGGARMQEGVYALVGMNLILAELARLAATPLPLITVLTDPTMGGVSASFAFKGDLIIAEAGAKIGFAGARVIQQTLPVKLPADFQTADQLFKNGMVDAVVERPQLRSTLGQALANYGIGRSAHG.

Residues 9–267 form the CoA carboxyltransferase N-terminal domain; sequence TWQACPKCGR…NYGIGRSAHG (259 aa). The Zn(2+) site is built by cysteine 13, cysteine 16, cysteine 31, and cysteine 34. The C4-type zinc-finger motif lies at 13–34; sequence CPKCGRHVHQRQWGTYQQCPYC.

This sequence belongs to the AccD/PCCB family. In terms of assembly, acetyl-CoA carboxylase is a heterohexamer composed of biotin carboxyl carrier protein (AccB), biotin carboxylase (AccC) and two subunits each of ACCase subunit alpha (AccA) and ACCase subunit beta (AccD). Zn(2+) is required as a cofactor.

Its subcellular location is the cytoplasm. The catalysed reaction is N(6)-carboxybiotinyl-L-lysyl-[protein] + acetyl-CoA = N(6)-biotinyl-L-lysyl-[protein] + malonyl-CoA. The protein operates within lipid metabolism; malonyl-CoA biosynthesis; malonyl-CoA from acetyl-CoA: step 1/1. In terms of biological role, component of the acetyl coenzyme A carboxylase (ACC) complex. Biotin carboxylase (BC) catalyzes the carboxylation of biotin on its carrier protein (BCCP) and then the CO(2) group is transferred by the transcarboxylase to acetyl-CoA to form malonyl-CoA. This is Acetyl-coenzyme A carboxylase carboxyl transferase subunit beta 1 from Lactiplantibacillus plantarum (strain JDM1) (Lactobacillus plantarum).